The chain runs to 1177 residues: DNA-directed RNA polymerase subunit beta (1177 aa).

Acidic residues predominate over residues 1147 to 1161 (DDTEIEMRDTEDDDD). Residues 1147–1177 (DDTEIEMRDTEDDDDHQSADKLNVEVETTKE) form a disordered region. Positions 1162 to 1177 (HQSADKLNVEVETTKE) are enriched in basic and acidic residues.

This sequence belongs to the RNA polymerase beta chain family. As to quaternary structure, the RNAP catalytic core consists of 2 alpha, 1 beta, 1 beta' and 1 omega subunit. When a sigma factor is associated with the core the holoenzyme is formed, which can initiate transcription.

It carries out the reaction RNA(n) + a ribonucleoside 5'-triphosphate = RNA(n+1) + diphosphate. Its function is as follows. DNA-dependent RNA polymerase catalyzes the transcription of DNA into RNA using the four ribonucleoside triphosphates as substrates. In Bacillus cereus (strain G9842), this protein is DNA-directed RNA polymerase subunit beta.